We begin with the raw amino-acid sequence, 497 residues long: Probable cytosol aminopeptidase (497 aa).

Residues Lys-267 and Asp-272 each coordinate Mn(2+). Residue Lys-279 is part of the active site. Mn(2+)-binding residues include Asp-290, Asp-349, and Glu-351. Residue Arg-353 is part of the active site.

It belongs to the peptidase M17 family. The cofactor is Mn(2+).

Its subcellular location is the cytoplasm. It catalyses the reaction Release of an N-terminal amino acid, Xaa-|-Yaa-, in which Xaa is preferably Leu, but may be other amino acids including Pro although not Arg or Lys, and Yaa may be Pro. Amino acid amides and methyl esters are also readily hydrolyzed, but rates on arylamides are exceedingly low.. The catalysed reaction is Release of an N-terminal amino acid, preferentially leucine, but not glutamic or aspartic acids.. In terms of biological role, presumably involved in the processing and regular turnover of intracellular proteins. Catalyzes the removal of unsubstituted N-terminal amino acids from various peptides. The polypeptide is Probable cytosol aminopeptidase (Nitrosomonas eutropha (strain DSM 101675 / C91 / Nm57)).